The chain runs to 479 residues: Deoxyribodipyrimidine photo-lyase (479 aa).

The Photolyase/cryptochrome alpha/beta domain maps to 6 to 132 (APVIVWFRKD…TVRSFSGQLL (127 aa)). Position 226 (Tyr-226) interacts with FAD. DNA is bound at residue Arg-230. FAD-binding positions include 238–242 (TSLLS) and 277–284 (EIVWREFC). 2 interaction with DNA regions span residues 277–284 (EIVWREFC) and 343–344 (NR). 374–376 (DAD) is an FAD binding site. Residue Gln-406 participates in DNA binding.

The protein belongs to the DNA photolyase class-3 family. FAD is required as a cofactor. It depends on (6R)-5,10-methylene-5,6,7,8-tetrahydrofolate as a cofactor.

It catalyses the reaction cyclobutadipyrimidine (in DNA) = 2 pyrimidine residues (in DNA).. Functionally, photolyase involved in the repair of UV radiation-induced DNA damage. By using blue-light energy, catalyzes the photoreactivation of cyclobutane pyrimidine dimers (CPDs), which are formed between adjacent bases on the same DNA strand upon exposure to ultraviolet radiation. Can repair CPD lesions in ssDNA as well as in dsDNA. In Agrobacterium fabrum (strain C58 / ATCC 33970) (Agrobacterium tumefaciens (strain C58)), this protein is Deoxyribodipyrimidine photo-lyase.